The following is a 764-amino-acid chain: FAST kinase domain-containing protein 5, mitochondrial (764 aa).

The N-terminal 27 residues, 1–27 (MAATLKSLKLVRYRAFCSPSAFGAVRS), are a transit peptide targeting the mitochondrion. Ser-95 is subject to Phosphoserine. Lys-507 is subject to N6-acetyllysine. Residues 697 to 757 (LAVQFTNRNQ…RLEKLAFLHE (61 aa)) form the RAP domain.

The protein belongs to the FAST kinase family. Found in a complex with GRSF1, DDX28, DHX30 and FASTKD2. Associates with the 12S mitochondrial rRNA (12S mt-rRNA). In terms of tissue distribution, expression detected in spleen, thymus, testis, ovary, colon, heart, smooth muscle, kidney, brain, lung, liver and white adipose tissue with highest expression in heart, smooth muscle, liver and thyroid.

The protein localises to the mitochondrion matrix. It is found in the mitochondrion nucleoid. Its function is as follows. Plays an important role in the processing of non-canonical mitochondrial mRNA precursors. The polypeptide is FAST kinase domain-containing protein 5, mitochondrial (FASTKD5) (Homo sapiens (Human)).